Consider the following 361-residue polypeptide: uncharacterized protein (361 aa).

41–48 (GPLNSGKT) serves as a coordination point for ATP.

The protein belongs to the archaeal ATPase family.

This is an uncharacterized protein from Methanocaldococcus jannaschii (strain ATCC 43067 / DSM 2661 / JAL-1 / JCM 10045 / NBRC 100440) (Methanococcus jannaschii).